A 631-amino-acid polypeptide reads, in one-letter code: Polyadenylate-binding protein 3 (631 aa).

4 consecutive RRM domains span residues 11–89, 99–175, 191–268, and 294–370; these read ASLY…WSQR, GNIF…QFKS, PNVY…RAQK, and VNLY…LAQR. Y140 carries the post-translational modification Phosphotyrosine. S315 carries the phosphoserine modification. K361 carries the post-translational modification N6,N6-dimethyllysine; alternate. K361 participates in a covalent cross-link: Glycyl lysine isopeptide (Lys-Gly) (interchain with G-Cter in SUMO2); alternate. At Y364 the chain carries Phosphotyrosine. 3 positions are modified to omega-N-methylarginine: R426, R430, and R449. The residue at position 501 (R501) is a Dimethylated arginine. Position 513 is an omega-N-methylarginine (R513). The PABC domain occupies 537–614; that stretch reads QETLTASRLA…AVAVLQAHQA (78 aa).

This sequence belongs to the polyadenylate-binding protein type-1 family. In terms of tissue distribution, testis specific.

It is found in the cytoplasm. Functionally, binds the poly(A) tail of mRNA. May be involved in cytoplasmic regulatory processes of mRNA metabolism. Binds poly(A) with a slightly lower affinity as compared to PABPC1. In Homo sapiens (Human), this protein is Polyadenylate-binding protein 3 (PABPC3).